Here is a 226-residue protein sequence, read N- to C-terminus: Survival motor neuron protein (226 aa).

Residues 35–44 are compositionally biased toward basic and acidic residues; sequence ADSTNKREEE. The interval 35–68 is disordered; sequence ADSTNKREEENAAAAEEEAGEISATGGATSPEPV. In terms of domain architecture, Tudor spans 69-128; that stretch reads SFKVGDYARATYVDGVDYEGAVVSINEEKGTCVLRYLGYENEQEVLLVDLLPSWGKRVRR. Residues 137–172 form a disordered region; the sequence is DEDEQLSRPKASAGSHSKTPKSSRRSRISGGLVMPP. A compositionally biased stretch (basic residues) spans 154–163; sequence KTPKSSRRSR. The required for homodimerization stretch occupies residues 159–226; sequence SRRSRISGGL…TSGKKKTPKK (68 aa).

The protein belongs to the SMN family. In terms of assembly, homodimer (via C-terminal region). Component of the core survival motor neuron (SMN) complex composed of Smn, Gem2, Gem3, rig/Gem5 and one of 3 almost identical Gem4 paralogs encoded by Glos/Gem4a, Gem4b or Gem4c. Interacts with Gem3 (via C-terminus); the interaction is direct and stabilizes Smn. Part of a minimal SMN complex composed of Smn and Gem2 only; this complex is active in UsnRNP assembly. The SMN complex associates with the entire set of spliceosomal snRNP Sm proteins, SmB, SmD1, SmD2, SmD3, SmE, SmF and SmG, and with the snRNP-specific proteins snRNP-U1-70K, U2A, snf/U1A and U5-116KD. Interacts with Glos/Gem4a; the interaction is probably indirect. Interacts with Sbat and Vlet; Sbat and Vlet, along with Hez, may form an accessory subcomplex involved in SMN complex function. Interacts weakly with Gem3. Interacts with SmB and SmD1; the interaction is favored by methylation of the Sm proteins. Interacts with Actn; the interaction occurs in thoracic tissues and in adult flies. Interacts with Rpp20. Interacts with msk and Snup; these interactions are RNA-dependent. As to expression, in late first instar larvae, expressed in pNBs. Expression increases as the pNBs enlarge, with the highest accumulation observed in dividing pNBs of second and third instar larvae. Enriched in type ID (thoracic and brain lobe), type IA and all the mira-expressing NBs of the brain lobes. In larvae, also expressed in muscle fibers. In larval and adult testis, expressed in germline stem cells and gonialblast, expression decreases as cells differentiate into cysts and spermatocytes. In adult fly thorax, expressed in the IFMs. In adult ovary, expressed in germline stem cells, cystoblasts, follicle cells, nurse cells and oocyte (at protein level). Also expressed in larval salivary glands.

The protein resides in the cytoplasm. It localises to the nucleus. It is found in the U-body. The protein localises to the gem. Its subcellular location is the cajal body. The protein resides in the myofibril. It localises to the sarcomere. It is found in the i band. The protein localises to the z line. Its function is as follows. Core component of the survival motor neuron (SMN) complex that plays an essential role in spliceosomal small nuclear ribonucleoprotein (snRNP) assembly in the cytoplasm, is required for pre-mRNA splicing in the nucleus and acts as a chaperone that discriminates target and non-target RNAs of Sm proteins. A major component of nuclear bodies known as gems (gemini of Cajal bodies) thought to be storage depots of excess SMN complexes. Required for normal expression of spliceosomal snRNAs and for U12 intron splicing. Required in cholinergic neurons, but not in motor neurons, to ensure correct splicing and proper levels of stas mRNA and normal neurotransmitter release by motor neurons. However, Smn is required in motor neurons, but not in cholinergic neurons, for normal motor behavior but plays no role in synaptic transmission according to a report. In both muscle and neurons, required for the formation of a normal neuromuscular junction (NMJ) structure. Plays a neuron-specific role in long-term homeostatic compensation at the larval NMJ. In the thorax of adult flies, required for Act88F, an indirect flight muscle (IFM)-specific actin, expression and for proper IFM myofibril formation. In nurse cells, oocytes and follicle cells, required to maintain normal organization of nuclear compartments including chromosomes, nucleoli, Cajal bodies, histone locus bodies and heterochromatin. Required for the functional integrity of the cytoplasmic U snRNP body (U body) and P body. Required in dividing postembryonic neuroblasts (pNBs) for the correct basal localization of mira. The tight regulation of its expression is critical for stem cell division, proliferation and differentiation in male germline and developing central nervous system (CNS). Required for tracheal terminal cell lumen formation. This Drosophila melanogaster (Fruit fly) protein is Survival motor neuron protein.